The following is a 289-amino-acid chain: Ribosomal protein L11 methyltransferase (289 aa).

S-adenosyl-L-methionine is bound by residues threonine 142, glycine 163, aspartate 185, and asparagine 226.

It belongs to the methyltransferase superfamily. PrmA family.

The protein resides in the cytoplasm. The enzyme catalyses L-lysyl-[protein] + 3 S-adenosyl-L-methionine = N(6),N(6),N(6)-trimethyl-L-lysyl-[protein] + 3 S-adenosyl-L-homocysteine + 3 H(+). Its function is as follows. Methylates ribosomal protein L11. This is Ribosomal protein L11 methyltransferase from Legionella pneumophila (strain Lens).